The sequence spans 256 residues: Dioxygenase lolE1 (256 aa).

The Fe cation site is built by histidine 125, aspartate 127, and histidine 203.

Belongs to the PhyH family. In terms of assembly, homodimer. The cofactor is Fe cation.

It participates in alkaloid biosynthesis. Its function is as follows. Dioxygenase; part of the gene cluster that mediates the biosynthesis of loline alkaloids, potent insecticidal agents composed of a pyrrolizidine ring system and an uncommon ether bridge linking carbons 2 and 7. Lolines are structurally differentiated by the various modifications of the L-amino group and include norloline, loline, N-methylloline, N-acetylloline, N-acetylnorloline, and N-formylloline. The first committed step is the condensation of O-acetyl-L-homoserine (derived from L-aspartic acid) and L-proline, probably catalyzed by the gamma-type pyridoxal 5'-phosphate(PLP)-dependent enzyme lolC, to give the diamino diacid, NACPP. Ensuing cyclization, decarboxylation, and acetylation steps yield 1-exo-acetamidopyrrolizidine (AcAP). LolO is required for installation of the ether bridge upon the pathway intermediate, 1-exo-acetamidopyrrolizidine (AcAP). In sequential 2-oxoglutarate- and O(2)-consuming steps, lolO removes hydrogens from C2 and C7 of AcAP to form both carbon-oxygen bonds in N-acetylnorloline (NANL), the precursor to all other lolines. The enzymes lolD, lolE, lolF and lolT have also been proposed to be involved in the ether-bridge installation. Further processing of the exocyclic moiety of NANL by fungal N-acetamidase (LolN), methyltransferase (LolM), and cytochrome P450 (LolP) enzymes, with occasional involvement of a plant acetyltransferase, generates the other known lolines. LolN transforms NANL to norlonine which is monomethylated and dimethylated to respectively lonine and N-methyllonine (NML) by lolM. LolP catalyzes hydroxylation of the methyl group in N-methylloline (NML) and further oxygenation to N-formylloline (NFL). A plant acetyltransferase is responsible for the acetylation of loline to form N-acetylloline (NAL). LolA might interact with aspartate kinase to prevent feedback inhibition of its activity by these end products and thereby promote production of L-homoserine from L-aspartate. The sequence is that of Dioxygenase lolE1 from Epichloe uncinata (Endophyte fungus).